The primary structure comprises 228 residues: MTGNQMFCRENELDESFKQLASYINIPVGVLLPFKSQCFVRHYNKGQIVYYSSDETTHIYLLLKGNIMRENFNLNGDVYRYLNREKVLFPLNNLFQDKVPNEMCTALTDCEMIGIPRDLIEYLCKNHEEIFVKLFSLLSETQCQHIEYNMALTSKLAKERVTKILRYLCQTVGYDHDEFYEIKHFMTIQLLSDMAGISRETTSHIINELKEEKILFKNSKNWLVSKDL.

Ser-22 to Thr-141 serves as a coordination point for a nucleoside 3',5'-cyclic phosphate. The region spanning Lys-155–Leu-228 is the HTH crp-type domain. Positions Ile-188–Asn-207 form a DNA-binding region, H-T-H motif.

It localises to the cytoplasm. In terms of biological role, positively regulates the expression of the arcABDCR operon under anaerobic conditions, thus playing an essential role in arginine catabolism. May also control the expression of genes encoding proteins which are involved in anaerobic metabolism. Can bind cyclic AMP. This Staphylococcus epidermidis (strain ATCC 35984 / DSM 28319 / BCRC 17069 / CCUG 31568 / BM 3577 / RP62A) protein is HTH-type transcriptional regulator ArcR (arcR).